A 99-amino-acid polypeptide reads, in one-letter code: Large ribosomal subunit protein uL23 (99 aa).

This sequence belongs to the universal ribosomal protein uL23 family. In terms of assembly, part of the 50S ribosomal subunit. Contacts protein L29, and trigger factor when it is bound to the ribosome.

One of the early assembly proteins it binds 23S rRNA. One of the proteins that surrounds the polypeptide exit tunnel on the outside of the ribosome. Forms the main docking site for trigger factor binding to the ribosome. The sequence is that of Large ribosomal subunit protein uL23 from Xanthomonas campestris pv. campestris (strain B100).